The chain runs to 207 residues: Ribosomal RNA small subunit methyltransferase G (207 aa).

S-adenosyl-L-methionine-binding positions include glycine 74, leucine 79, valine 125–glutamate 126, and arginine 140.

Belongs to the methyltransferase superfamily. RNA methyltransferase RsmG family.

The protein resides in the cytoplasm. It catalyses the reaction guanosine(527) in 16S rRNA + S-adenosyl-L-methionine = N(7)-methylguanosine(527) in 16S rRNA + S-adenosyl-L-homocysteine. Specifically methylates the N7 position of guanine in position 527 of 16S rRNA. The sequence is that of Ribosomal RNA small subunit methyltransferase G from Shewanella halifaxensis (strain HAW-EB4).